Here is a 190-residue protein sequence, read N- to C-terminus: Flavodoxin-like domain-containing protein BilS (190 aa).

It functions in the pathway porphyrin-containing compound metabolism; protoheme degradation. Together with BilR, catalyzes reduction of mesobilirubin and/or bilirubin to urobilinogen, a key step during heme degradation. BilS is probably involved in electron transfer for the bilirubin reductase BilR. The sequence is that of Flavodoxin-like domain-containing protein BilS from Clostridium symbiosum (strain WAL-14163).